The sequence spans 103 residues: MLNDLYEEIKKRKEQPKEGSYTNYLFEKGLDKILKKVGEETTEVIIASKNNNQELVNEVADLTYHLLVLLAEKNVSLSSVQAELERREGKLSTTRDRKEIDEL.

The tract at residues 79 to 103 (SVQAELERREGKLSTTRDRKEIDEL) is disordered. Positions 83–103 (ELERREGKLSTTRDRKEIDEL) are enriched in basic and acidic residues.

It belongs to the PRA-PH family.

It localises to the cytoplasm. It catalyses the reaction 1-(5-phospho-beta-D-ribosyl)-ATP + H2O = 1-(5-phospho-beta-D-ribosyl)-5'-AMP + diphosphate + H(+). It functions in the pathway amino-acid biosynthesis; L-histidine biosynthesis; L-histidine from 5-phospho-alpha-D-ribose 1-diphosphate: step 2/9. This Listeria welshimeri serovar 6b (strain ATCC 35897 / DSM 20650 / CCUG 15529 / CIP 8149 / NCTC 11857 / SLCC 5334 / V8) protein is Phosphoribosyl-ATP pyrophosphatase.